Consider the following 338-residue polypeptide: Aspartate-semialdehyde dehydrogenase (338 aa).

Residues serine 13–valine 16 and arginine 41–serine 42 each bind NADP(+). Residue arginine 101 coordinates phosphate. Cysteine 132 functions as the Acyl-thioester intermediate in the catalytic mechanism. Residue glutamine 159 participates in substrate binding. NADP(+) is bound by residues serine 162–glycine 163 and proline 187. Residue lysine 216 coordinates phosphate. Residue arginine 238 coordinates substrate. The active-site Proton acceptor is the histidine 245. Residue asparagine 317 participates in NADP(+) binding.

It belongs to the aspartate-semialdehyde dehydrogenase family. Homodimer.

It carries out the reaction L-aspartate 4-semialdehyde + phosphate + NADP(+) = 4-phospho-L-aspartate + NADPH + H(+). Its pathway is amino-acid biosynthesis; L-lysine biosynthesis via DAP pathway; (S)-tetrahydrodipicolinate from L-aspartate: step 2/4. It participates in amino-acid biosynthesis; L-methionine biosynthesis via de novo pathway; L-homoserine from L-aspartate: step 2/3. It functions in the pathway amino-acid biosynthesis; L-threonine biosynthesis; L-threonine from L-aspartate: step 2/5. Its function is as follows. Catalyzes the NADPH-dependent formation of L-aspartate-semialdehyde (L-ASA) by the reductive dephosphorylation of L-aspartyl-4-phosphate. This Shewanella sp. (strain DB6705) protein is Aspartate-semialdehyde dehydrogenase.